The sequence spans 212 residues: Deoxyribose-phosphate aldolase (212 aa).

Asp-89 (proton donor/acceptor) is an active-site residue. Lys-151 serves as the catalytic Schiff-base intermediate with acetaldehyde. The active-site Proton donor/acceptor is the Lys-180.

It belongs to the DeoC/FbaB aldolase family. DeoC type 1 subfamily.

The protein localises to the cytoplasm. It catalyses the reaction 2-deoxy-D-ribose 5-phosphate = D-glyceraldehyde 3-phosphate + acetaldehyde. Its pathway is carbohydrate degradation; 2-deoxy-D-ribose 1-phosphate degradation; D-glyceraldehyde 3-phosphate and acetaldehyde from 2-deoxy-alpha-D-ribose 1-phosphate: step 2/2. Catalyzes a reversible aldol reaction between acetaldehyde and D-glyceraldehyde 3-phosphate to generate 2-deoxy-D-ribose 5-phosphate. The sequence is that of Deoxyribose-phosphate aldolase from Clostridium botulinum (strain 657 / Type Ba4).